Here is a 303-residue protein sequence, read N- to C-terminus: MKVIFMGTPEFAVPALKKLITHHEVKAVFAQQPKAKGRGLNLAKSPIHQLAFEHQIPVYTPSTLRNDKTINLINKINADIIVVIAYGFIVPKAILEAKKYGCLNIHPSDLPRHRGAAPLQRTIIEGDRKSSVCIMRMDAGLDTGDILMKEDFDLEERTTLEELHNKCANLGAELLIKTLANIDNIVPIKQSSDGVTYAHKLTKEEGKINWYESAYKIDCKIRGMNPWPGAYFSYNDKIIKILEAEYLNAEHHFTSGTVISDKLEIACGSGILRVKKLQQESKKALNIEEFLRGTNILKDTILK.

Serine 108–proline 111 contributes to the (6S)-5,6,7,8-tetrahydrofolate binding site.

It belongs to the Fmt family.

It carries out the reaction L-methionyl-tRNA(fMet) + (6R)-10-formyltetrahydrofolate = N-formyl-L-methionyl-tRNA(fMet) + (6S)-5,6,7,8-tetrahydrofolate + H(+). Attaches a formyl group to the free amino group of methionyl-tRNA(fMet). The formyl group appears to play a dual role in the initiator identity of N-formylmethionyl-tRNA by promoting its recognition by IF2 and preventing the misappropriation of this tRNA by the elongation apparatus. The sequence is that of Methionyl-tRNA formyltransferase from Rickettsia felis (strain ATCC VR-1525 / URRWXCal2) (Rickettsia azadi).